Consider the following 914-residue polypeptide: Valine--tRNA ligase (914 aa).

The 'HIGH' region motif lies at Pro-47–His-57. The 'KMSKS' region signature appears at Lys-552–Ser-556. Position 555 (Lys-555) interacts with ATP.

It belongs to the class-I aminoacyl-tRNA synthetase family. ValS type 2 subfamily.

It is found in the cytoplasm. The enzyme catalyses tRNA(Val) + L-valine + ATP = L-valyl-tRNA(Val) + AMP + diphosphate. In terms of biological role, catalyzes the attachment of valine to tRNA(Val). As ValRS can inadvertently accommodate and process structurally similar amino acids such as threonine, to avoid such errors, it has a 'posttransfer' editing activity that hydrolyzes mischarged Thr-tRNA(Val) in a tRNA-dependent manner. The protein is Valine--tRNA ligase of Methanopyrus kandleri (strain AV19 / DSM 6324 / JCM 9639 / NBRC 100938).